The sequence spans 243 residues: DNA repair protein RecO (243 aa).

This sequence belongs to the RecO family.

Involved in DNA repair and RecF pathway recombination. This chain is DNA repair protein RecO, found in Caulobacter sp. (strain K31).